Consider the following 115-residue polypeptide: Large ribosomal subunit protein bL19 (115 aa).

Belongs to the bacterial ribosomal protein bL19 family.

Functionally, this protein is located at the 30S-50S ribosomal subunit interface and may play a role in the structure and function of the aminoacyl-tRNA binding site. The polypeptide is Large ribosomal subunit protein bL19 (Nitrosococcus oceani (strain ATCC 19707 / BCRC 17464 / JCM 30415 / NCIMB 11848 / C-107)).